Reading from the N-terminus, the 480-residue chain is DNA repair protein RadA (480 aa).

The C4-type zinc finger occupies 10–27 (CSECRHVSAKWVGRCLEC). 95–102 (GDPGVGKS) serves as a coordination point for ATP. Positions 254-258 (KNRFG) match the RadA KNRFG motif motif. A lon-protease-like region spans residues 353 to 480 (DIYLSTVGGM…TGHVPLGRGT (128 aa)). The segment at 459–480 (GTTLATPPSHSGTGHVPLGRGT) is disordered. Over residues 461–470 (TLATPPSHSG) the composition is skewed to polar residues.

The protein belongs to the RecA family. RadA subfamily.

Functionally, DNA-dependent ATPase involved in processing of recombination intermediates, plays a role in repairing DNA breaks. Stimulates the branch migration of RecA-mediated strand transfer reactions, allowing the 3' invading strand to extend heteroduplex DNA faster. Binds ssDNA in the presence of ADP but not other nucleotides, has ATPase activity that is stimulated by ssDNA and various branched DNA structures, but inhibited by SSB. Does not have RecA's homology-searching function. The sequence is that of DNA repair protein RadA from Mycobacterium tuberculosis (strain CDC 1551 / Oshkosh).